Here is a 299-residue protein sequence, read N- to C-terminus: Recombination-associated protein RdgC (299 aa).

This sequence belongs to the RdgC family.

It localises to the cytoplasm. The protein localises to the nucleoid. Functionally, may be involved in recombination. The protein is Recombination-associated protein RdgC of Cupriavidus necator (strain ATCC 17699 / DSM 428 / KCTC 22496 / NCIMB 10442 / H16 / Stanier 337) (Ralstonia eutropha).